Consider the following 150-residue polypeptide: Arginine repressor (150 aa).

Belongs to the ArgR family.

Its subcellular location is the cytoplasm. Its pathway is amino-acid biosynthesis; L-arginine biosynthesis [regulation]. In terms of biological role, regulates arginine biosynthesis genes. This is Arginine repressor from Thermoanaerobacter sp. (strain X514).